The primary structure comprises 142 residues: Nucleoside diphosphate kinase (142 aa).

ATP is bound by residues Lys-11, Phe-59, Arg-87, Thr-93, Arg-104, and Asn-114. Residue His-117 is the Pros-phosphohistidine intermediate of the active site.

Belongs to the NDK family. As to quaternary structure, homotetramer. Requires Mg(2+) as cofactor.

Its subcellular location is the cytoplasm. The enzyme catalyses a 2'-deoxyribonucleoside 5'-diphosphate + ATP = a 2'-deoxyribonucleoside 5'-triphosphate + ADP. It carries out the reaction a ribonucleoside 5'-diphosphate + ATP = a ribonucleoside 5'-triphosphate + ADP. In terms of biological role, major role in the synthesis of nucleoside triphosphates other than ATP. The ATP gamma phosphate is transferred to the NDP beta phosphate via a ping-pong mechanism, using a phosphorylated active-site intermediate. This is Nucleoside diphosphate kinase from Yersinia pseudotuberculosis serotype O:1b (strain IP 31758).